The primary structure comprises 497 residues: Alkene monooxygenase system, oxygenase component subunit alpha (497 aa).

6 residues coordinate Fe cation: E104, E134, H137, E197, E231, and H234.

Belongs to the TmoA/XamoA family. The alkene monooxygenase multicomponent enzyme system is composed of an electron transfer component and a monooxygenase component interacting with the effector protein XamoD. The electron transfer component is composed of a ferredoxin reductase (XamoF) and a ferredoxin (XamoC), and the monooxygenase component is formed by a heterohexamer (dimer of heterotrimers) of two alpha subunits (XamoA), two beta subunits (XamoE) and two gamma subunits (XamoB). Fe(2+) serves as cofactor.

The protein localises to the cytoplasm. It carries out the reaction propene + NADH + O2 + H(+) = 1,2-epoxypropane + NAD(+) + H2O. Its activity is regulated as follows. Inhibited by propyne. Functionally, component of the alkene monooxygenase multicomponent enzyme system which catalyzes the O2- and NADH-dependent epoxidation of short chain (C2 to C6) alkenes to their corresponding epoxides. Also able to catalyze the oxidation of a number of chlorinated alkenes, including trichloroethylene, cis- and trans-1,2-dichloroethylene, vinyl chloride, 1-chloropropylene, 1,3-dichloropropylene and 2,3-dichloropropylene. This chain is Alkene monooxygenase system, oxygenase component subunit alpha, found in Xanthobacter autotrophicus (strain ATCC BAA-1158 / Py2).